Consider the following 211-residue polypeptide: Nucleoside diphosphate kinase homolog 5 (211 aa).

Positions 13-145 (EKTLALIKPD…EREIRFMFPA (133 aa)) are NDK.

The protein belongs to the NDK family. As to quaternary structure, component of the axonemal radial spoke complex 1 (RS1), at least composed of spoke head proteins RSPH1, RSPH3, RSPH9 and the cilia-specific component RSPH4A or sperm-specific component RSPH6A, spoke stalk proteins RSPH14, DNAJB13, DYDC1, ROPN1L and NME5, and the anchor protein IQUB. Interacts with IQUB. Expressed in the trachea, ependymal cells and oviduct (at protein level). Expressed predominantly in germ cells of the testis. Not expressed in testicular somatic cells.

The protein resides in the cell projection. It is found in the cilium. Its subcellular location is the cytoplasm. It localises to the cytoskeleton. The protein localises to the flagellum axoneme. Functions as part of axonemal radial spoke complexes that play an important part in the motility of sperm and cilia. Does not seem to have nucleoside diphosphate kinase (NDPK) activity. Confers protection from cell death by BAX and alters the cellular levels of several antioxidant enzymes including GPX5. May play a role in spermiogenesis by increasing the ability of late-stage spermatids to eliminate reactive oxygen species. In Mus musculus (Mouse), this protein is Nucleoside diphosphate kinase homolog 5 (Nme5).